The primary structure comprises 92 residues: RQC P-site tRNA stabilizing factor (92 aa).

Positions 5-65 (MRLDKYLKVS…GPKIVTAKIE (61 aa)) constitute an S4 RNA-binding domain.

It belongs to the RqcP family. As to quaternary structure, associates with stalled 50S ribosomal subunits. Binds to RqcH, 23S rRNA and the P-site tRNA. Does not require RqcH for association with 50S subunits.

Functionally, key component of the ribosome quality control system (RQC), a ribosome-associated complex that mediates the extraction of incompletely synthesized nascent chains from stalled ribosomes and their subsequent degradation. RqcH recruits Ala-charged tRNA, and with RqcP directs the elongation of stalled nascent chains on 50S ribosomal subunits, leading to non-templated C-terminal alanine extensions (Ala tail). The Ala tail promotes nascent chain degradation. RqcP is associated with the translocation-like movement of the peptidyl-tRNA from the A-site into the P-site. This is RQC P-site tRNA stabilizing factor from Listeria monocytogenes serovar 1/2a (strain ATCC BAA-679 / EGD-e).